An 84-amino-acid polypeptide reads, in one-letter code: Cell division topological specificity factor (84 aa).

The protein belongs to the MinE family.

Functionally, prevents the cell division inhibition by proteins MinC and MinD at internal division sites while permitting inhibition at polar sites. This ensures cell division at the proper site by restricting the formation of a division septum at the midpoint of the long axis of the cell. In Cupriavidus pinatubonensis (strain JMP 134 / LMG 1197) (Cupriavidus necator (strain JMP 134)), this protein is Cell division topological specificity factor.